A 179-amino-acid chain; its full sequence is ATP synthase subunit delta (179 aa).

The protein belongs to the ATPase delta chain family. F-type ATPases have 2 components, F(1) - the catalytic core - and F(0) - the membrane proton channel. F(1) has five subunits: alpha(3), beta(3), gamma(1), delta(1), epsilon(1). F(0) has three main subunits: a(1), b(2) and c(10-14). The alpha and beta chains form an alternating ring which encloses part of the gamma chain. F(1) is attached to F(0) by a central stalk formed by the gamma and epsilon chains, while a peripheral stalk is formed by the delta and b chains.

It is found in the cell inner membrane. F(1)F(0) ATP synthase produces ATP from ADP in the presence of a proton or sodium gradient. F-type ATPases consist of two structural domains, F(1) containing the extramembraneous catalytic core and F(0) containing the membrane proton channel, linked together by a central stalk and a peripheral stalk. During catalysis, ATP synthesis in the catalytic domain of F(1) is coupled via a rotary mechanism of the central stalk subunits to proton translocation. In terms of biological role, this protein is part of the stalk that links CF(0) to CF(1). It either transmits conformational changes from CF(0) to CF(1) or is implicated in proton conduction. The protein is ATP synthase subunit delta of Anaeromyxobacter sp. (strain K).